The sequence spans 149 residues: UPF0102 protein Bpro_0391 (149 aa).

The interval 1–30 (MWFSRKQVVKPPPDGSRAQPGQVTTKSRGD) is disordered.

It belongs to the UPF0102 family.

The polypeptide is UPF0102 protein Bpro_0391 (Polaromonas sp. (strain JS666 / ATCC BAA-500)).